We begin with the raw amino-acid sequence, 205 residues long: Heme ligase (205 aa).

The FAS1 domain maps to 48-203; the sequence is KRTIINLIYS…GVVHIVDKPI (156 aa). The required for binding to host hemoglobin stretch occupies residues 154–172; sequence LRNLLNNDLIVKIEGEFKH. Heme binding domain regions lie at residues 171-181 and 191-200; these read KHCNHSIYLNG and CHNGVVHIVD.

As to quaternary structure, component of the hemozoin formation complex (HFC) composed of falcipains FP2A and/or FP2B, plasmepsins PMII, PMIII/HAP and PMIV, heme detoxifying protein HDP and falcilysin FLN. The HFC complex is involved in hemoglobin degradation and detoxification of heme in the food vacuole during the asexual blood stage. Interacts with falcipain 2; the interaction is direct and enhances HDP catalytic activity. Interacts with host hemoglobin.

The protein localises to the vacuole. The protein resides in the host cytoplasm. Its subcellular location is the host cytosol. It catalyses the reaction 2 Fe(III)-heme b = beta-hematin. Its function is as follows. Heme detoxifying enzyme that converts heme to crystalline hemozoin (beta-hematin) to protect the organism from the toxic effects of heme. During its development, P.falciparum proteolyzes vast amounts of host hemoglobin, leading to heme release. This chain is Heme ligase, found in Plasmodium falciparum (isolate 3D7).